Consider the following 245-residue polypeptide: Pyridoxine 5'-phosphate synthase (245 aa).

Residue Asn7 coordinates 3-amino-2-oxopropyl phosphate. 9-10 (DH) contacts 1-deoxy-D-xylulose 5-phosphate. Arg18 lines the 3-amino-2-oxopropyl phosphate pocket. His43 (proton acceptor) is an active-site residue. The 1-deoxy-D-xylulose 5-phosphate site is built by Arg45 and His50. Glu70 acts as the Proton acceptor in catalysis. Thr100 lines the 1-deoxy-D-xylulose 5-phosphate pocket. His190 (proton donor) is an active-site residue. 3-amino-2-oxopropyl phosphate is bound by residues Gly191 and 212-213 (GH).

The protein belongs to the PNP synthase family. In terms of assembly, homooctamer; tetramer of dimers.

It is found in the cytoplasm. The enzyme catalyses 3-amino-2-oxopropyl phosphate + 1-deoxy-D-xylulose 5-phosphate = pyridoxine 5'-phosphate + phosphate + 2 H2O + H(+). Its pathway is cofactor biosynthesis; pyridoxine 5'-phosphate biosynthesis; pyridoxine 5'-phosphate from D-erythrose 4-phosphate: step 5/5. In terms of biological role, catalyzes the complicated ring closure reaction between the two acyclic compounds 1-deoxy-D-xylulose-5-phosphate (DXP) and 3-amino-2-oxopropyl phosphate (1-amino-acetone-3-phosphate or AAP) to form pyridoxine 5'-phosphate (PNP) and inorganic phosphate. This chain is Pyridoxine 5'-phosphate synthase, found in Prochlorococcus marinus (strain NATL1A).